A 285-amino-acid polypeptide reads, in one-letter code: Shikimate dehydrogenase (NADP(+)) (285 aa).

Residues 21–23 (SRS) and Thr-68 contribute to the shikimate site. Lys-72 acts as the Proton acceptor in catalysis. Glu-83 serves as a coordination point for NADP(+). Residues Asn-92 and Asp-107 each contribute to the shikimate site. Residues 132–136 (GAGGS), 156–161 (NRTMER), and Leu-221 each bind NADP(+). Tyr-223 lines the shikimate pocket. Gly-244 provides a ligand contact to NADP(+).

The protein belongs to the shikimate dehydrogenase family. Homodimer.

It catalyses the reaction shikimate + NADP(+) = 3-dehydroshikimate + NADPH + H(+). It functions in the pathway metabolic intermediate biosynthesis; chorismate biosynthesis; chorismate from D-erythrose 4-phosphate and phosphoenolpyruvate: step 4/7. Its function is as follows. Involved in the biosynthesis of the chorismate, which leads to the biosynthesis of aromatic amino acids. Catalyzes the reversible NADPH linked reduction of 3-dehydroshikimate (DHSA) to yield shikimate (SA). This chain is Shikimate dehydrogenase (NADP(+)), found in Nitrobacter hamburgensis (strain DSM 10229 / NCIMB 13809 / X14).